The following is a 344-amino-acid chain: Dimethyladenosine transferase 1, mitochondrial (344 aa).

The transit peptide at 1 to 27 (MATPGALAKFRLPPLPTIGEIVKLFNL) directs the protein to the mitochondrion. Asn36, Leu38, Gly63, Glu85, Lys86, Asp111, Ile112, and Asn141 together coordinate S-adenosyl-L-methionine.

It belongs to the class I-like SAM-binding methyltransferase superfamily. rRNA adenine N(6)-methyltransferase family. KsgA subfamily.

Its subcellular location is the mitochondrion. It carries out the reaction adenosine(N)/adenosine(N+1) in rRNA + 4 S-adenosyl-L-methionine = N(6)-dimethyladenosine(N)/N(6)-dimethyladenosine(N+1) in rRNA + 4 S-adenosyl-L-homocysteine + 4 H(+). In terms of biological role, mitochondrial methyltransferase which uses S-adenosyl methionine to dimethylate two highly conserved adjacent adenosine residues (A1583 and A1584) within the loop of helix 45 at the 3-prime end of 12S rRNA, thereby regulating the assembly or stability of the small subunit of the mitochondrial ribosome. Also required for basal transcription of mitochondrial DNA, probably via its interaction with POLRMT and TFAM. Stimulates transcription independently of the methyltransferase activity. In Xenopus laevis (African clawed frog), this protein is Dimethyladenosine transferase 1, mitochondrial (tfb1m.L).